Reading from the N-terminus, the 898-residue chain is Phosphoenolpyruvate carboxylase (898 aa).

Residues His134 and Lys564 contribute to the active site.

The protein belongs to the PEPCase type 1 family. It depends on Mg(2+) as a cofactor.

The enzyme catalyses oxaloacetate + phosphate = phosphoenolpyruvate + hydrogencarbonate. In terms of biological role, forms oxaloacetate, a four-carbon dicarboxylic acid source for the tricarboxylic acid cycle. This Chromobacterium violaceum (strain ATCC 12472 / DSM 30191 / JCM 1249 / CCUG 213 / NBRC 12614 / NCIMB 9131 / NCTC 9757 / MK) protein is Phosphoenolpyruvate carboxylase.